The chain runs to 777 residues: Histone-lysine N-methyltransferase set9 (777 aa).

Positions 117–231 (CPFEVNATNR…VGEEITVTYS (115 aa)) constitute an SET domain. 2 disordered regions span residues 263-414 (AVQK…ILSP) and 682-718 (RMGSKGKQGSSAPSTKGTPAGEKNEQSAKQEQSQGQY). A compositionally biased stretch (polar residues) spans 291-301 (TALQASRTPSV). The span at 323–337 (TSTTDSAAQGAGADG) shows a compositional bias: low complexity. Polar residues-rich tracts occupy residues 371–405 (TAPSRGSSDNETSKSPLSFSTTNDNVTDATSQGSE) and 688–698 (KQGSSAPSTKG).

It belongs to the class V-like SAM-binding methyltransferase superfamily. Histone-lysine methyltransferase family. Suvar4-20 subfamily.

The protein localises to the nucleus. It is found in the chromosome. The catalysed reaction is L-lysyl(20)-[histone H4] + 3 S-adenosyl-L-methionine = N(6),N(6),N(6)-trimethyl-L-lysyl(20)-[histone H4] + 3 S-adenosyl-L-homocysteine + 3 H(+). Histone methyltransferase that trimethylates 'Lys-20' of histone H4 to form H4K20me3. In Neurospora crassa (strain ATCC 24698 / 74-OR23-1A / CBS 708.71 / DSM 1257 / FGSC 987), this protein is Histone-lysine N-methyltransferase set9 (hlm-1).